An 893-amino-acid chain; its full sequence is Protein kintoun (893 aa).

5 disordered regions span residues 211–243 (KNATAEEREPHPLEHTYPKKPEANAGKPKVLPM), 372–395 (LSREDSGVELNSNSESPAEDEEAG), 587–719 (EQVH…SIDD), 781–821 (QRKK…QQTA), and 834–893 (PQNN…DEDM). Over residues 214-232 (TAEEREPHPLEHTYPKKPE) the composition is skewed to basic and acidic residues. Ser377 bears the Phosphoserine mark. The span at 594–603 (QQEEEEEEEQ) shows a compositional bias: acidic residues. Residues 609 to 626 (HQHKKGNKKQRKRNKKQR) are compositionally biased toward basic residues. Residues 640 to 651 (QQQQHQKQQQQQ) show a composition bias toward low complexity. Composition is skewed to polar residues over residues 656–667 (ENSSPESLNAGS) and 684–694 (FSECNDSSSVQ). Low complexity predominate over residues 709–719 (SISESSSSIDD). A compositionally biased stretch (basic residues) spans 781–797 (QRKKNQKRRDCKLRAQQ). Ser801 carries the post-translational modification Phosphoserine. Over residues 836-848 (NNNNRSYSKNNKN) the composition is skewed to low complexity. The segment covering 865-877 (NNEEDTKRNEADA) has biased composition (basic and acidic residues). Over residues 884–893 (EMDDDDDEDM) the composition is skewed to acidic residues.

It belongs to the PIH1 family. Kintoun subfamily. Interacts with Pp1alpha-96A, Pp1-87B, Pp1-13C and flw.

The protein resides in the cytoplasm. In terms of biological role, required for cytoplasmic pre-assembly of axonemal dyneins, thereby playing a central role in motility in cilia and flagella. Involved in pre-assembly of dynein arm complexes in the cytoplasm before intraflagellar transport loads them for the ciliary compartment. In Drosophila grimshawi (Hawaiian fruit fly), this protein is Protein kintoun.